The sequence spans 264 residues: Synaptophysin-like protein 2 (264 aa).

At 1–33 (MSSTESPSRAADKSPRQQVDRLLEGLRWRRLEE) the chain is on the cytoplasmic side. The 209-residue stretch at 30-238 (RLEEPLGFIK…NCWFVFKETP (209 aa)) folds into the MARVEL domain. A helical transmembrane segment spans residues 34–54 (PLGFIKVLQWLFAIFAFGSCG). Topologically, residues 55-116 (SYSGETGAMV…LMGDFSAPAE (62 aa)) are vesicular. A helical membrane pass occupies residues 117–137 (FFVTLGIFSFFYTMAALVVYL). Residues 138–150 (RFHKLYTENKRFP) lie on the Cytoplasmic side of the membrane. A helical membrane pass occupies residues 151–171 (LVDFCVTVSFTFFWLVAAAAW). Topologically, residues 172-213 (GKGLTDVKGATRPSSLTAAMSVCHGEEAVCSAGATPSMGLAN) are vesicular. Asn213 is a glycosylation site (N-linked (GlcNAc...) asparagine). The helical transmembrane segment at 214–234 (ISVLFGFINFFLWAGNCWFVF) threads the bilayer. Topologically, residues 235 to 264 (KETPWHGQGQDQGQGPSQESAAEQGAVEKQ) are cytoplasmic. The tract at residues 242-264 (QGQDQGQGPSQESAAEQGAVEKQ) is disordered.

The protein belongs to the synaptophysin/synaptobrevin family. Skeletal muscle.

The protein localises to the membrane. Functionally, involved in communication between the T-tubular and junctional sarcoplasmic reticulum (SR) membranes. The protein is Synaptophysin-like protein 2 (SYPL2) of Oryctolagus cuniculus (Rabbit).